Reading from the N-terminus, the 154-residue chain is Toxin YhaV (154 aa).

In terms of assembly, homohexamer; forms a complex with PrlF (SohA) with stoichiometry PrlF(2)-YhaV(4), possibly as a YhaV(2)-PrlF(2)-YhaV(2) complex like the MazFE complex. May dimerize in solution.

Functionally, toxic component of a type II toxin-antitoxin (TA) system. Has RNase activity in vitro. Acts as a transcription factor. The YhaV/PrlF complex binds the prlF-yhaV operon, probably negatively regulating its expression. The chain is Toxin YhaV (yhaV) from Escherichia coli O6:H1 (strain CFT073 / ATCC 700928 / UPEC).